Reading from the N-terminus, the 39-residue chain is MTPSLANFLWSLLWGTAIVVIPVTVGLIFISQKDKIQRS.

A helical membrane pass occupies residues 10-30 (WSLLWGTAIVVIPVTVGLIFI).

This sequence belongs to the PsbX family. Type 1 subfamily. As to quaternary structure, PSII is composed of 1 copy each of membrane proteins PsbA, PsbB, PsbC, PsbD, PsbE, PsbF, PsbH, PsbI, PsbJ, PsbK, PsbL, PsbM, PsbT, PsbX, PsbY, PsbZ, Psb30/Ycf12, peripheral proteins PsbO, CyanoQ (PsbQ), PsbU, PsbV and a large number of cofactors. It forms dimeric complexes.

The protein resides in the cellular thylakoid membrane. In terms of biological role, involved in the binding and/or turnover of quinones at the Q(B) site of photosystem II (PSII). PSII is a light-driven water plastoquinone oxidoreductase, using light energy to abstract electrons from H(2)O, generating a proton gradient subsequently used for ATP formation. The polypeptide is Photosystem II reaction center protein X (Nostoc punctiforme (strain ATCC 29133 / PCC 73102)).